Reading from the N-terminus, the 688-residue chain is Polyphosphate kinase (688 aa).

Position 45 (N45) interacts with ATP. Positions 375 and 405 each coordinate Mg(2+). Residues 430-464 (PGLKIHAKLFLISRKENGEVVRYAHIGTGNFNEKT) enclose the PLD phosphodiesterase domain. H435 acts as the Phosphohistidine intermediate in catalysis. 3 residues coordinate ATP: Y468, R564, and H592.

The protein belongs to the polyphosphate kinase 1 (PPK1) family. It depends on Mg(2+) as a cofactor. An intermediate of this reaction is the autophosphorylated ppk in which a phosphate is covalently linked to a histidine residue through a N-P bond.

The enzyme catalyses [phosphate](n) + ATP = [phosphate](n+1) + ADP. In terms of biological role, catalyzes the reversible transfer of the terminal phosphate of ATP to form a long-chain polyphosphate (polyP). The polypeptide is Polyphosphate kinase (Escherichia coli O6:H1 (strain CFT073 / ATCC 700928 / UPEC)).